The following is a 356-amino-acid chain: NADH-quinone oxidoreductase subunit H (356 aa).

9 helical membrane-spanning segments follow: residues 22–42 (GVVS…TAYL), 59–79 (PSLA…KLVF), 93–113 (FIIA…VIPI), 124–144 (IGGI…IIIA), 171–191 (MALS…IQIV), 198–218 (PIWL…SILA), 240–260 (VEYS…NMIL), 285–305 (IPGY…FLWI), and 321–341 (GLKV…TILV).

The protein belongs to the complex I subunit 1 family. As to quaternary structure, NDH-1 is composed of 14 different subunits. Subunits NuoA, H, J, K, L, M, N constitute the membrane sector of the complex.

Its subcellular location is the cell inner membrane. The enzyme catalyses a quinone + NADH + 5 H(+)(in) = a quinol + NAD(+) + 4 H(+)(out). NDH-1 shuttles electrons from NADH, via FMN and iron-sulfur (Fe-S) centers, to quinones in the respiratory chain. The immediate electron acceptor for the enzyme in this species is believed to be ubiquinone. Couples the redox reaction to proton translocation (for every two electrons transferred, four hydrogen ions are translocated across the cytoplasmic membrane), and thus conserves the redox energy in a proton gradient. This subunit may bind ubiquinone. The chain is NADH-quinone oxidoreductase subunit H from Orientia tsutsugamushi (strain Boryong) (Rickettsia tsutsugamushi).